Reading from the N-terminus, the 114-residue chain is Ribonuclease P protein component (114 aa).

This sequence belongs to the RnpA family. Consists of a catalytic RNA component (M1 or rnpB) and a protein subunit.

It catalyses the reaction Endonucleolytic cleavage of RNA, removing 5'-extranucleotides from tRNA precursor.. Functionally, RNaseP catalyzes the removal of the 5'-leader sequence from pre-tRNA to produce the mature 5'-terminus. It can also cleave other RNA substrates such as 4.5S RNA. The protein component plays an auxiliary but essential role in vivo by binding to the 5'-leader sequence and broadening the substrate specificity of the ribozyme. The protein is Ribonuclease P protein component of Exiguobacterium sp. (strain ATCC BAA-1283 / AT1b).